The primary structure comprises 529 residues: Bifunctional purine biosynthesis protein PurH (529 aa).

The 148-residue stretch at 1–148 (MTNRNVIKNV…KNYKNVLVVT (148 aa)) folds into the MGS-like domain.

This sequence belongs to the PurH family.

It catalyses the reaction (6R)-10-formyltetrahydrofolate + 5-amino-1-(5-phospho-beta-D-ribosyl)imidazole-4-carboxamide = 5-formamido-1-(5-phospho-D-ribosyl)imidazole-4-carboxamide + (6S)-5,6,7,8-tetrahydrofolate. It carries out the reaction IMP + H2O = 5-formamido-1-(5-phospho-D-ribosyl)imidazole-4-carboxamide. It functions in the pathway purine metabolism; IMP biosynthesis via de novo pathway; 5-formamido-1-(5-phospho-D-ribosyl)imidazole-4-carboxamide from 5-amino-1-(5-phospho-D-ribosyl)imidazole-4-carboxamide (10-formyl THF route): step 1/1. It participates in purine metabolism; IMP biosynthesis via de novo pathway; IMP from 5-formamido-1-(5-phospho-D-ribosyl)imidazole-4-carboxamide: step 1/1. The protein is Bifunctional purine biosynthesis protein PurH of Buchnera aphidicola subsp. Baizongia pistaciae (strain Bp).